Reading from the N-terminus, the 352-residue chain is Galactokinase (352 aa).

Position 17 to 20 (17 to 20 (EHTD)) interacts with substrate. Residues Ser49 and 101–107 (GAGLSSS) each bind ATP. Residues Ser107 and Glu139 each contribute to the Mg(2+) site. Asp151 acts as the Proton acceptor in catalysis. Tyr200 serves as a coordination point for substrate.

The protein belongs to the GHMP kinase family. GalK subfamily. As to quaternary structure, monomer.

Its subcellular location is the cytoplasm. It carries out the reaction alpha-D-galactose + ATP = alpha-D-galactose 1-phosphate + ADP + H(+). The protein operates within carbohydrate metabolism; galactose metabolism. In terms of biological role, catalyzes the transfer of the gamma-phosphate of ATP to D-galactose to form alpha-D-galactose-1-phosphate (Gal-1-P). Is very specific for its substrate, since it is not able to use D-glucose, D-fructose, D-mannose, 2-deoxy-D-glucose, and D-glucosamine as substrates. This Pyrococcus furiosus (strain ATCC 43587 / DSM 3638 / JCM 8422 / Vc1) protein is Galactokinase.